Reading from the N-terminus, the 507-residue chain is ATP synthase subunit alpha (507 aa).

Residue 169 to 176 participates in ATP binding; that stretch reads GDRQTGKT.

Belongs to the ATPase alpha/beta chains family. F-type ATPases have 2 components, CF(1) - the catalytic core - and CF(0) - the membrane proton channel. CF(1) has five subunits: alpha(3), beta(3), gamma(1), delta(1), epsilon(1). CF(0) has three main subunits: a(1), b(2) and c(9-12). The alpha and beta chains form an alternating ring which encloses part of the gamma chain. CF(1) is attached to CF(0) by a central stalk formed by the gamma and epsilon chains, while a peripheral stalk is formed by the delta and b chains. In this bacterium the a and b subunits are transcribed but do not seem to be translated, thus the ATP synthase consists of the alpha, beta, gamma, delta, epsilon and c subunits.

The protein localises to the cell membrane. It carries out the reaction ATP + H2O + 4 H(+)(in) = ADP + phosphate + 5 H(+)(out). Its function is as follows. Produces ATP from ADP in the presence of a proton gradient across the membrane. The alpha chain is a regulatory subunit. The polypeptide is ATP synthase subunit alpha (Moorella thermoacetica (strain ATCC 39073 / JCM 9320)).